A 354-amino-acid polypeptide reads, in one-letter code: Protein RecA (354 aa).

Residue 68 to 75 (GPESSGKT) coordinates ATP.

Belongs to the RecA family.

The protein localises to the cytoplasm. Functionally, can catalyze the hydrolysis of ATP in the presence of single-stranded DNA, the ATP-dependent uptake of single-stranded DNA by duplex DNA, and the ATP-dependent hybridization of homologous single-stranded DNAs. It interacts with LexA causing its activation and leading to its autocatalytic cleavage. The chain is Protein RecA from Synechocystis sp. (strain ATCC 27184 / PCC 6803 / Kazusa).